The sequence spans 145 residues: Photosystem I reaction center subunit XI (145 aa).

3 helical membrane passes run 48-68 (LEIG…LGPL), 75-95 (LLVG…ALTI), and 125-145 (IGAL…SFFA).

It belongs to the PsaL family.

It localises to the plastid. It is found in the chloroplast thylakoid membrane. The sequence is that of Photosystem I reaction center subunit XI from Isochrysis galbana (Marine planktonic alga).